Reading from the N-terminus, the 444-residue chain is Glycogen synthase (444 aa).

Residue R15 coordinates ADP-alpha-D-glucose.

Belongs to the glycosyltransferase 1 family. Bacterial/plant glycogen synthase subfamily.

It carries out the reaction [(1-&gt;4)-alpha-D-glucosyl](n) + ADP-alpha-D-glucose = [(1-&gt;4)-alpha-D-glucosyl](n+1) + ADP + H(+). The protein operates within glycan biosynthesis; glycogen biosynthesis. Functionally, synthesizes alpha-1,4-glucan chains using ADP-glucose. The chain is Glycogen synthase from Deinococcus radiodurans (strain ATCC 13939 / DSM 20539 / JCM 16871 / CCUG 27074 / LMG 4051 / NBRC 15346 / NCIMB 9279 / VKM B-1422 / R1).